Here is a 165-residue protein sequence, read N- to C-terminus: MDIAHDLQSIAAQEHALVFPHFDADTAWQLGAYLHEIAKARGLALAIDIRSFGQPLFFSLLEGATPDNVDWARRKGNTVAHFRRSSYAVGLKLQQSNATLADKHGLPVSDYAAHGGAFPLIAKGTGVIGSVTVSGLPQRADHELVVEALCAHLGHDYSKLALAKA.

This sequence belongs to the UPF0303 family.

This is UPF0303 protein Bphy_1660 from Paraburkholderia phymatum (strain DSM 17167 / CIP 108236 / LMG 21445 / STM815) (Burkholderia phymatum).